The following is a 532-amino-acid chain: 3-hydroxy-3-methylglutaryl-coenzyme A reductase 1 (532 aa).

The chain crosses the membrane as a helical span at residues 63-83 (FATVVYLVSLFAHPDAPATTT). Residues 77–117 (DAPATTTGDDDDGQGGSRRARPAAAEPAPMHGHGGGMMEAD) are linker. Residues 78–111 (APATTTGDDDDGQGGSRRARPAAAEPAPMHGHGG) form a disordered region. A compositionally biased stretch (low complexity) spans 98-107 (PAAAEPAPMH). The interval 118 to 532 (DEEIVAAVAS…SSKDVAKAAS (415 aa)) is catalytic. The active-site Charge relay system is the E211. N-linked (GlcNAc...) asparagine glycosylation is present at N275. Catalysis depends on charge relay system residues K343 and D419. H517 acts as the Proton donor in catalysis. N-linked (GlcNAc...) asparagine glycosylation occurs at N521.

The protein belongs to the HMG-CoA reductase family.

The protein localises to the endoplasmic reticulum membrane. The catalysed reaction is (R)-mevalonate + 2 NADP(+) + CoA = (3S)-3-hydroxy-3-methylglutaryl-CoA + 2 NADPH + 2 H(+). Its pathway is metabolic intermediate biosynthesis; (R)-mevalonate biosynthesis; (R)-mevalonate from acetyl-CoA: step 3/3. Functionally, catalyzes the synthesis of mevalonate. The specific precursor of all isoprenoid compounds present in plants. The polypeptide is 3-hydroxy-3-methylglutaryl-coenzyme A reductase 1 (HMG1) (Oryza sativa subsp. japonica (Rice)).